Reading from the N-terminus, the 711-residue chain is 1,4-alpha-glucan branching enzyme GlgB (711 aa).

Asp392 functions as the Nucleophile in the catalytic mechanism. The active-site Proton donor is Glu443.

This sequence belongs to the glycosyl hydrolase 13 family. GlgB subfamily. Monomer.

The enzyme catalyses Transfers a segment of a (1-&gt;4)-alpha-D-glucan chain to a primary hydroxy group in a similar glucan chain.. It participates in glycan biosynthesis; glycogen biosynthesis. Functionally, catalyzes the formation of the alpha-1,6-glucosidic linkages in glycogen by scission of a 1,4-alpha-linked oligosaccharide from growing alpha-1,4-glucan chains and the subsequent attachment of the oligosaccharide to the alpha-1,6 position. The chain is 1,4-alpha-glucan branching enzyme GlgB from Corynebacterium jeikeium (strain K411).